The following is a 188-amino-acid chain: Apolipophorin-3 (188 aa).

Residues 1–17 (MVAKLFVLVACIALSHA) form the signal peptide. Residues 18–22 (AMVRR) constitute a propeptide that is removed on maturation.

This sequence belongs to the insect apolipophorin-3 family. In terms of assembly, equilibrium between a soluble monomer and a bound lipoprotein form. Apolipophorin-3 associates with lipophorin during lipid loading until each particle contains 9 or 14 molecules of apolipophorin-3. In terms of tissue distribution, expressed in fat body and secreted in hemolymph. Also expressed in ovary and testis at lower levels.

The protein resides in the secreted. Its function is as follows. Assists in the loading of diacylglycerol, generated from triacylglycerol stores in the fat body through the action of adipokinetic hormone, into lipophorin, the hemolymph lipoprotein. It increases the lipid carrying capacity of lipophorin by covering the expanding hydrophobic surface resulting from diacylglycerol uptake. It thus plays a critical role in the transport of lipids during flight in several species of insects. The protein is Apolipophorin-3 of Spodoptera litura (Asian cotton leafworm).